A 576-amino-acid polypeptide reads, in one-letter code: RING finger and SPRY domain-containing protein 1 (576 aa).

Positions 1–16 are cleaved as a signal peptide; it reads MIVLGWAVFLASRSLG. Residue S50 is modified to Phosphoserine. The segment at 50–99 is disordered; the sequence is SGTDDSVDTQQQQAENSAVPTADTRSQPRDPVRPPRRGRGPHEPRRKKQN. Over residues 57 to 68 the composition is skewed to polar residues; sequence DTQQQQAENSAV. Over residues 83–97 the composition is skewed to basic residues; the sequence is PPRRGRGPHEPRRKK. A B30.2/SPRY domain is found at 300 to 483; that stretch reads LFLKEGRQLT…CEFNFGAKPF (184 aa). N-linked (GlcNAc...) asparagine glycosylation is present at N314. The segment at 527–562 adopts an RING-type zinc-finger fold; that stretch reads CSLCCDEVADTQLKPCGHSDLCMDCALQLETCPLCR.

Its subcellular location is the secreted. This chain is RING finger and SPRY domain-containing protein 1 (RSPRY1), found in Macaca fascicularis (Crab-eating macaque).